We begin with the raw amino-acid sequence, 269 residues long: 3-methyl-2-oxobutanoate hydroxymethyltransferase (269 aa).

Mg(2+)-binding residues include Asp50 and Asp89. 3-methyl-2-oxobutanoate contacts are provided by residues 50-51 (DS), Asp89, and Lys118. Mg(2+) is bound at residue Glu120. The active-site Proton acceptor is Glu187.

This sequence belongs to the PanB family. In terms of assembly, homodecamer; pentamer of dimers. Mg(2+) is required as a cofactor.

Its subcellular location is the cytoplasm. It catalyses the reaction 3-methyl-2-oxobutanoate + (6R)-5,10-methylene-5,6,7,8-tetrahydrofolate + H2O = 2-dehydropantoate + (6S)-5,6,7,8-tetrahydrofolate. It functions in the pathway cofactor biosynthesis; (R)-pantothenate biosynthesis; (R)-pantoate from 3-methyl-2-oxobutanoate: step 1/2. Functionally, catalyzes the reversible reaction in which hydroxymethyl group from 5,10-methylenetetrahydrofolate is transferred onto alpha-ketoisovalerate to form ketopantoate. In Nitrosomonas europaea (strain ATCC 19718 / CIP 103999 / KCTC 2705 / NBRC 14298), this protein is 3-methyl-2-oxobutanoate hydroxymethyltransferase.